The following is a 154-amino-acid chain: Ribonuclease H (154 aa).

An RNase H type-1 domain is found at 1 to 142 (MRKQIEIFTD…CDELAKQGAE (142 aa)). Mg(2+) contacts are provided by Asp10, Glu48, Asp70, and Asp134.

The protein belongs to the RNase H family. In terms of assembly, monomer. Requires Mg(2+) as cofactor.

It localises to the cytoplasm. The enzyme catalyses Endonucleolytic cleavage to 5'-phosphomonoester.. Its function is as follows. Endonuclease that specifically degrades the RNA of RNA-DNA hybrids. In Actinobacillus succinogenes (strain ATCC 55618 / DSM 22257 / CCUG 43843 / 130Z), this protein is Ribonuclease H.